The chain runs to 203 residues: Reticulon-like protein B12 (203 aa).

The 180-residue stretch at 24-203 (VADVMLWRKK…WANPENKKLS (180 aa)) folds into the Reticulon domain. Helical transmembrane passes span 34 to 54 (NVSV…EAFA), 55 to 75 (YTIF…LFLW), and 132 to 152 (VAVS…QTLC).

The protein resides in the endoplasmic reticulum membrane. This chain is Reticulon-like protein B12 (RTNLB12), found in Arabidopsis thaliana (Mouse-ear cress).